The primary structure comprises 294 residues: Phosphatidylglycerol--prolipoprotein diacylglyceryl transferase (294 aa).

A run of 7 helical transmembrane segments spans residues 19–39 (VFGF…GIVL), 69–89 (LLTW…VFFY), 101–121 (ILAV…VIAA), 139–159 (IMAL…FINA), 195–215 (QLYE…WLVW), 224–244 (GYVA…VEFF), and 267–287 (WGLT…IWLI). Arginine 152 contacts a 1,2-diacyl-sn-glycero-3-phospho-(1'-sn-glycerol).

Belongs to the Lgt family.

The protein resides in the cell inner membrane. It catalyses the reaction L-cysteinyl-[prolipoprotein] + a 1,2-diacyl-sn-glycero-3-phospho-(1'-sn-glycerol) = an S-1,2-diacyl-sn-glyceryl-L-cysteinyl-[prolipoprotein] + sn-glycerol 1-phosphate + H(+). It participates in protein modification; lipoprotein biosynthesis (diacylglyceryl transfer). Catalyzes the transfer of the diacylglyceryl group from phosphatidylglycerol to the sulfhydryl group of the N-terminal cysteine of a prolipoprotein, the first step in the formation of mature lipoproteins. The polypeptide is Phosphatidylglycerol--prolipoprotein diacylglyceryl transferase (Roseobacter denitrificans (strain ATCC 33942 / OCh 114) (Erythrobacter sp. (strain OCh 114))).